The sequence spans 687 residues: Methionine--tRNA ligase (687 aa).

The short motif at 14 to 24 is the 'HIGH' region element; that stretch reads PYANGYIHLGH. Residues cysteine 145, cysteine 148, cysteine 158, and cysteine 161 each coordinate Zn(2+). Positions 329–333 match the 'KMSKS' region motif; it reads KMSKS. Lysine 332 provides a ligand contact to ATP. The tRNA-binding domain occupies 585 to 687; the sequence is DFDKVDLRIG…DGAQVGQRVK (103 aa).

Belongs to the class-I aminoacyl-tRNA synthetase family. MetG type 1 subfamily. In terms of assembly, homodimer. The cofactor is Zn(2+).

It is found in the cytoplasm. It carries out the reaction tRNA(Met) + L-methionine + ATP = L-methionyl-tRNA(Met) + AMP + diphosphate. Its function is as follows. Is required not only for elongation of protein synthesis but also for the initiation of all mRNA translation through initiator tRNA(fMet) aminoacylation. This is Methionine--tRNA ligase from Bdellovibrio bacteriovorus (strain ATCC 15356 / DSM 50701 / NCIMB 9529 / HD100).